We begin with the raw amino-acid sequence, 320 residues long: Cell division protein FtsQ (320 aa).

A disordered region spans residues methionine 1–lysine 24. Residues methionine 1–arginine 52 lie on the Cytoplasmic side of the membrane. The chain crosses the membrane as a helical span at residues isoleucine 53–alanine 73. Over glycine 74–glycine 320 the chain is Periplasmic. The 69-residue stretch at phenylalanine 92 to arginine 160 folds into the POTRA domain. Residues alanine 296 to glycine 320 form a disordered region.

Belongs to the FtsQ/DivIB family. FtsQ subfamily.

It localises to the cell inner membrane. Functionally, essential cell division protein. The chain is Cell division protein FtsQ from Novosphingobium aromaticivorans (strain ATCC 700278 / DSM 12444 / CCUG 56034 / CIP 105152 / NBRC 16084 / F199).